We begin with the raw amino-acid sequence, 406 residues long: ATP phosphoribosyltransferase regulatory subunit (406 aa).

Belongs to the class-II aminoacyl-tRNA synthetase family. HisZ subfamily. As to quaternary structure, heteromultimer composed of HisG and HisZ subunits.

It is found in the cytoplasm. The protein operates within amino-acid biosynthesis; L-histidine biosynthesis; L-histidine from 5-phospho-alpha-D-ribose 1-diphosphate: step 1/9. In terms of biological role, required for the first step of histidine biosynthesis. May allow the feedback regulation of ATP phosphoribosyltransferase activity by histidine. The sequence is that of ATP phosphoribosyltransferase regulatory subunit from Methylococcus capsulatus (strain ATCC 33009 / NCIMB 11132 / Bath).